The following is a 309-amino-acid chain: UDP-N-acetylenolpyruvoylglucosamine reductase (309 aa).

Positions 40-204 (LGGKVPLFAI…LQATFKLKKG (165 aa)) constitute an FAD-binding PCMH-type domain. Arginine 182 is a catalytic residue. Catalysis depends on serine 233, which acts as the Proton donor. Glutamate 304 is an active-site residue.

Belongs to the MurB family. Requires FAD as cofactor.

It is found in the cytoplasm. The catalysed reaction is UDP-N-acetyl-alpha-D-muramate + NADP(+) = UDP-N-acetyl-3-O-(1-carboxyvinyl)-alpha-D-glucosamine + NADPH + H(+). The protein operates within cell wall biogenesis; peptidoglycan biosynthesis. Cell wall formation. This chain is UDP-N-acetylenolpyruvoylglucosamine reductase, found in Fervidobacterium nodosum (strain ATCC 35602 / DSM 5306 / Rt17-B1).